A 312-amino-acid polypeptide reads, in one-letter code: Malate dehydrogenase (312 aa).

NAD(+) contacts are provided by residues 12–17 (GAGFTG) and D36. Substrate is bound by residues R87 and R93. Residues N100 and 123 to 125 (LTN) contribute to the NAD(+) site. Position 125 (N125) interacts with substrate. S149 is modified (phosphoserine). Substrate is bound at residue R156. Residue H180 is the Proton acceptor of the active site.

Belongs to the LDH/MDH superfamily. MDH type 3 family.

The enzyme catalyses (S)-malate + NAD(+) = oxaloacetate + NADH + H(+). Its function is as follows. Catalyzes the reversible oxidation of malate to oxaloacetate. The sequence is that of Malate dehydrogenase from Bacillus anthracis (strain A0248).